We begin with the raw amino-acid sequence, 186 residues long: MKRTQYNNLVSSYARALFLVSENKLSVVRKEVEFLLAFFKSQHDVFIYLSHPMISFARKKEVIFSVNEHLSESLVKFIAVIFANKRSNLLISVLEKFLTLVRESENELEITIKSAETLSESNIKIITESLSFLGKIVRVDNAVDPSILGGFIVKYGFNLIDASLKSYLDRLVDLSKVEILKTRNFI.

It belongs to the ATPase delta chain family. As to quaternary structure, F-type ATPases have 2 components, F(1) - the catalytic core - and F(0) - the membrane proton channel. F(1) has five subunits: alpha(3), beta(3), gamma(1), delta(1), epsilon(1). F(0) has three main subunits: a(1), b(2) and c(10-14). The alpha and beta chains form an alternating ring which encloses part of the gamma chain. F(1) is attached to F(0) by a central stalk formed by the gamma and epsilon chains, while a peripheral stalk is formed by the delta and b chains.

The protein localises to the cell membrane. In terms of biological role, f(1)F(0) ATP synthase produces ATP from ADP in the presence of a proton or sodium gradient. F-type ATPases consist of two structural domains, F(1) containing the extramembraneous catalytic core and F(0) containing the membrane proton channel, linked together by a central stalk and a peripheral stalk. During catalysis, ATP synthesis in the catalytic domain of F(1) is coupled via a rotary mechanism of the central stalk subunits to proton translocation. Functionally, this protein is part of the stalk that links CF(0) to CF(1). It either transmits conformational changes from CF(0) to CF(1) or is implicated in proton conduction. This chain is ATP synthase subunit delta, found in Wolbachia sp. subsp. Brugia malayi (strain TRS).